Consider the following 583-residue polypeptide: 2-succinyl-5-enolpyruvyl-6-hydroxy-3-cyclohexene-1-carboxylate synthase (583 aa).

It belongs to the TPP enzyme family. MenD subfamily. As to quaternary structure, homodimer. Mg(2+) serves as cofactor. Requires Mn(2+) as cofactor. It depends on thiamine diphosphate as a cofactor.

The enzyme catalyses isochorismate + 2-oxoglutarate + H(+) = 5-enolpyruvoyl-6-hydroxy-2-succinyl-cyclohex-3-ene-1-carboxylate + CO2. It participates in quinol/quinone metabolism; 1,4-dihydroxy-2-naphthoate biosynthesis; 1,4-dihydroxy-2-naphthoate from chorismate: step 2/7. It functions in the pathway quinol/quinone metabolism; menaquinone biosynthesis. Catalyzes the thiamine diphosphate-dependent decarboxylation of 2-oxoglutarate and the subsequent addition of the resulting succinic semialdehyde-thiamine pyrophosphate anion to isochorismate to yield 2-succinyl-5-enolpyruvyl-6-hydroxy-3-cyclohexene-1-carboxylate (SEPHCHC). The protein is 2-succinyl-5-enolpyruvyl-6-hydroxy-3-cyclohexene-1-carboxylate synthase of Roseiflexus sp. (strain RS-1).